Reading from the N-terminus, the 516-residue chain is Keratin, type II cuticular Hb2 (516 aa).

The tract at residues 1–118 (MSCRNFQLSP…PTVQRVKRDE (118 aa)) is head. Positions 118–429 (EKEQIKCLNN…RLLEGEEHRL (312 aa)) constitute an IF rod domain. Residues 119–153 (KEQIKCLNNRFASFINKVRFLEQKNKLLETKWNFM) are coil 1A. The segment at 154-163 (QQQRSCQSNM) is linker 1. The coil 1B stretch occupies residues 164-264 (EPLFEGYICA…FEEEIGLLQS (101 aa)). Residues 265–281 (QISETSVIVKMDNSREL) form a linker 12 region. A coil 2 region spans residues 282-425 (DVDGIVAEIK…ATYRRLLEGE (144 aa)). The tract at residues 426-516 (EHRLCEGIGP…VGVGSNSCSR (91 aa)) is tail.

The protein belongs to the intermediate filament family. Heterotetramer of two type I and two type II keratins.

This chain is Keratin, type II cuticular Hb2 (Krt82), found in Mus musculus (Mouse).